A 105-amino-acid polypeptide reads, in one-letter code: Large ribosomal subunit protein uL24 (105 aa).

This sequence belongs to the universal ribosomal protein uL24 family. Part of the 50S ribosomal subunit.

Functionally, one of two assembly initiator proteins, it binds directly to the 5'-end of the 23S rRNA, where it nucleates assembly of the 50S subunit. One of the proteins that surrounds the polypeptide exit tunnel on the outside of the subunit. The chain is Large ribosomal subunit protein uL24 from Mycobacterium sp. (strain JLS).